Consider the following 266-residue polypeptide: tRNA pseudouridine synthase A (266 aa).

D55 serves as the catalytic Nucleophile. Residue Y110 coordinates substrate.

This sequence belongs to the tRNA pseudouridine synthase TruA family.

The catalysed reaction is uridine(38/39/40) in tRNA = pseudouridine(38/39/40) in tRNA. Formation of pseudouridine at positions 38, 39 and 40 in the anticodon stem and loop of transfer RNAs. The sequence is that of tRNA pseudouridine synthase A from Thermococcus sibiricus (strain DSM 12597 / MM 739).